The following is an 899-amino-acid chain: Bifunctional uridylyltransferase/uridylyl-removing enzyme (899 aa).

Residues 1–342 (MPQVDPDLFD…PGDAAGRVEP (342 aa)) form a uridylyltransferase region. The interval 343–705 (LNERFQVRDG…TTQREFEGAT (363 aa)) is uridylyl-removing. Residues 461–583 (VDAHTLNLIK…VRDQTYLDYL (123 aa)) form the HD domain. ACT domains follow at residues 706–789 (QIFI…IIQR) and 816–899 (ILEI…RISI).

This sequence belongs to the GlnD family. The cofactor is Mg(2+).

The catalysed reaction is [protein-PII]-L-tyrosine + UTP = [protein-PII]-uridylyl-L-tyrosine + diphosphate. It catalyses the reaction [protein-PII]-uridylyl-L-tyrosine + H2O = [protein-PII]-L-tyrosine + UMP + H(+). With respect to regulation, uridylyltransferase (UTase) activity is inhibited by glutamine, while glutamine activates uridylyl-removing (UR) activity. Functionally, modifies, by uridylylation and deuridylylation, the PII regulatory proteins (GlnB and homologs), in response to the nitrogen status of the cell that GlnD senses through the glutamine level. Under low glutamine levels, catalyzes the conversion of the PII proteins and UTP to PII-UMP and PPi, while under higher glutamine levels, GlnD hydrolyzes PII-UMP to PII and UMP (deuridylylation). Thus, controls uridylylation state and activity of the PII proteins, and plays an important role in the regulation of nitrogen fixation and metabolism. The polypeptide is Bifunctional uridylyltransferase/uridylyl-removing enzyme (Azotobacter vinelandii (strain DJ / ATCC BAA-1303)).